The sequence spans 417 residues: Imidazolonepropionase (417 aa).

Positions 77 and 79 each coordinate Fe(3+). Zn(2+) contacts are provided by histidine 77 and histidine 79. Residues arginine 86, tyrosine 149, and histidine 182 each coordinate 4-imidazolone-5-propanoate. Tyrosine 149 lines the N-formimidoyl-L-glutamate pocket. Histidine 244 provides a ligand contact to Fe(3+). A Zn(2+)-binding site is contributed by histidine 244. Glutamate 247 provides a ligand contact to 4-imidazolone-5-propanoate. Aspartate 323 contributes to the Fe(3+) binding site. Residue aspartate 323 coordinates Zn(2+). Asparagine 325 contributes to the N-formimidoyl-L-glutamate binding site.

The protein belongs to the metallo-dependent hydrolases superfamily. HutI family. It depends on Zn(2+) as a cofactor. Requires Fe(3+) as cofactor.

It is found in the cytoplasm. It carries out the reaction 4-imidazolone-5-propanoate + H2O = N-formimidoyl-L-glutamate. The protein operates within amino-acid degradation; L-histidine degradation into L-glutamate; N-formimidoyl-L-glutamate from L-histidine: step 3/3. Its function is as follows. Catalyzes the hydrolytic cleavage of the carbon-nitrogen bond in imidazolone-5-propanoate to yield N-formimidoyl-L-glutamate. It is the third step in the universal histidine degradation pathway. The chain is Imidazolonepropionase from Halobacterium salinarum (strain ATCC 29341 / DSM 671 / R1).